A 323-amino-acid polypeptide reads, in one-letter code: Acetyl-coenzyme A carboxylase carboxyl transferase subunit alpha (323 aa).

The region spanning 40-293 (LSEKSLQLTK…RKALSDSLKT (254 aa)) is the CoA carboxyltransferase C-terminal domain.

The protein belongs to the AccA family. As to quaternary structure, acetyl-CoA carboxylase is a heterohexamer composed of biotin carboxyl carrier protein (AccB), biotin carboxylase (AccC) and two subunits each of ACCase subunit alpha (AccA) and ACCase subunit beta (AccD).

Its subcellular location is the cytoplasm. The enzyme catalyses N(6)-carboxybiotinyl-L-lysyl-[protein] + acetyl-CoA = N(6)-biotinyl-L-lysyl-[protein] + malonyl-CoA. The protein operates within lipid metabolism; malonyl-CoA biosynthesis; malonyl-CoA from acetyl-CoA: step 1/1. Its function is as follows. Component of the acetyl coenzyme A carboxylase (ACC) complex. First, biotin carboxylase catalyzes the carboxylation of biotin on its carrier protein (BCCP) and then the CO(2) group is transferred by the carboxyltransferase to acetyl-CoA to form malonyl-CoA. This chain is Acetyl-coenzyme A carboxylase carboxyl transferase subunit alpha, found in Polynucleobacter asymbioticus (strain DSM 18221 / CIP 109841 / QLW-P1DMWA-1) (Polynucleobacter necessarius subsp. asymbioticus).